The chain runs to 95 residues: Aspartyl/glutamyl-tRNA(Asn/Gln) amidotransferase subunit C (95 aa).

The protein belongs to the GatC family. Heterotrimer of A, B and C subunits.

The catalysed reaction is L-glutamyl-tRNA(Gln) + L-glutamine + ATP + H2O = L-glutaminyl-tRNA(Gln) + L-glutamate + ADP + phosphate + H(+). The enzyme catalyses L-aspartyl-tRNA(Asn) + L-glutamine + ATP + H2O = L-asparaginyl-tRNA(Asn) + L-glutamate + ADP + phosphate + 2 H(+). Its function is as follows. Allows the formation of correctly charged Asn-tRNA(Asn) or Gln-tRNA(Gln) through the transamidation of misacylated Asp-tRNA(Asn) or Glu-tRNA(Gln) in organisms which lack either or both of asparaginyl-tRNA or glutaminyl-tRNA synthetases. The reaction takes place in the presence of glutamine and ATP through an activated phospho-Asp-tRNA(Asn) or phospho-Glu-tRNA(Gln). This is Aspartyl/glutamyl-tRNA(Asn/Gln) amidotransferase subunit C from Rhodospirillum rubrum (strain ATCC 11170 / ATH 1.1.1 / DSM 467 / LMG 4362 / NCIMB 8255 / S1).